A 290-amino-acid polypeptide reads, in one-letter code: Dual-specificity RNA pseudouridine synthase RluF (290 aa).

One can recognise an S4 RNA-binding domain in the interval 7 to 72; the sequence is VRLNKYISES…EAEDLVLIAL (66 aa). Interaction with RNA regions lie at residues 105 to 108 and 187 to 190; these read RLDK and RQIR. D107 acts as the Nucleophile in catalysis. The tract at residues 241 to 290 is disordered; that stretch reads SEAKPKAKAKPKTAGIKRPVVKMEKTAEKGGRPASNGKRFTSPGRKKKGR. Residues 261-271 are compositionally biased toward basic and acidic residues; sequence VKMEKTAEKGG.

Belongs to the pseudouridine synthase RsuA family. In terms of assembly, monomer.

The catalysed reaction is uridine(2604) in 23S rRNA = pseudouridine(2604) in 23S rRNA. The enzyme catalyses uridine(35) in tRNA(Tyr) = pseudouridine(35) in tRNA(Tyr). Its function is as follows. Dual specificity enzyme that catalyzes the synthesis of pseudouridine from uracil-2604 in 23S ribosomal RNA and from uracil-35 in the anticodon of tRNA(Tyr). This Escherichia coli O157:H7 protein is Dual-specificity RNA pseudouridine synthase RluF (rluF).